The following is a 569-amino-acid chain: Cationic amino acid transporter 5 (569 aa).

Over 1–67 (MEGEERGYWR…KQSEHEMKRC (67 aa)) the chain is Cytoplasmic. Residues 68–88 (LTWWDLVWFGFGSVIGAGIFV) form a helical membrane-spanning segment. Residues 89-97 (LTGQEAHEQ) lie on the Extracellular side of the membrane. Residues 98-118 (AGPAIVLSYVVSGLSAMLSVF) traverse the membrane as a helical segment. At 119 to 143 (CYTEFAVEIPVAGGSFAYLRIELGD) the chain is on the cytoplasmic side. A helical transmembrane segment spans residues 144 to 164 (FAAFITAGNILLESIVGTAAV). At 165–192 (ARAWTSYFATLLNRSPNALRIKTDLSSG) the chain is on the extracellular side. The chain crosses the membrane as a helical span at residues 193–213 (FNLLDPIAVVVIAASATIASI). At 214–222 (STRKTSLLN) the chain is on the cytoplasmic side. The helical transmembrane segment at 223–243 (WIASAINTLVIFFVIIAGFIH) threads the bilayer. Residues 244-251 (ADTSNLTP) lie on the Extracellular side of the membrane. The helical transmembrane segment at 252 to 272 (FLPFGPEGVFRAAAVVYFAYG) threads the bilayer. Over 273–290 (GFDSIATMAEETKNPSRD) the chain is Cytoplasmic. A helical membrane pass occupies residues 291–311 (IPIGLLGSMSIITVIYCLMAL). The Extracellular segment spans residues 312 to 341 (SLSMMQKYTDIDPNAAYSVAFQSVGMKWGK). The helical transmembrane segment at 342–362 (YLVALGALKGMTTVLLVGALG) threads the bilayer. Over 363 to 389 (QARYVTHIARTHMIPPIFALVHPKTGT) the chain is Cytoplasmic. Residues 390–410 (PINANLLVAIPSALIAFFSGL) traverse the membrane as a helical segment. Residue aspartate 411 is a topological domain, extracellular. Residues 412-432 (VLASLLSISTLFIFTMMPIAL) form a helical membrane-spanning segment. Topologically, residues 433–450 (LVRRYYVRQDTPRVHLIK) are cytoplasmic. The helical transmembrane segment at 451-471 (LITCLLFVVVSSMGTSAYWGM) threads the bilayer. Residues 472 to 477 (QRKGSW) lie on the Extracellular side of the membrane. The chain crosses the membrane as a helical span at residues 478–498 (IGYTVTVPFWFLGTLGIVFFV). Topologically, residues 499–505 (PQQRTPK) are cytoplasmic. A helical membrane pass occupies residues 506 to 526 (VWGVPLVPWLPCLSIATNIFL). At 527-537 (MGSLGAMAFVR) the chain is on the extracellular side. A helical membrane pass occupies residues 538–558 (FGVCTLAMLLYYFLLGLHATF). At 559-569 (DMAHQQIVPRT) the chain is on the cytoplasmic side.

It belongs to the amino acid-polyamine-organocation (APC) superfamily. Cationic amino acid transporter (CAT) (TC 2.A.3.3) family. As to expression, expressed in roots, stems, flowers, seeds, and leaves. Mostly present in leaf rims and cotyledons of developing seedlings.

The protein resides in the cell membrane. Its function is as follows. High-affinity permease involved in the transport of the cationic amino acids (e.g. arginine, and, to a lower extent, citrulline and glutamate). Transport mostly basic amino acids, and, to a lower extent neutral and acidic amino acids. The chain is Cationic amino acid transporter 5 (CAT5) from Arabidopsis thaliana (Mouse-ear cress).